The primary structure comprises 116 residues: Large ribosomal subunit protein bL17 (116 aa).

This sequence belongs to the bacterial ribosomal protein bL17 family. As to quaternary structure, part of the 50S ribosomal subunit. Contacts protein L32.

The protein is Large ribosomal subunit protein bL17 of Trichormus variabilis (strain ATCC 29413 / PCC 7937) (Anabaena variabilis).